A 128-amino-acid chain; its full sequence is uncharacterized protein (128 aa).

This is an uncharacterized protein from Mycobacterium tuberculosis (strain CDC 1551 / Oshkosh).